Reading from the N-terminus, the 156-residue chain is MPRKRVIARREVLPDPKYGSVQLAKFITILMLSGKKSLAERIIYGALGRVSEKANQDPMDVLEKALENVRPLVEVKSRRVGGATYQVPVEVRPERRSTLAMRWLVEAARKRSEKSMDLRLAGELLDAHEGKGTAVKKREDTHRMAEANKAFAHYRW.

The protein belongs to the universal ribosomal protein uS7 family. As to quaternary structure, part of the 30S ribosomal subunit. Contacts proteins S9 and S11.

Functionally, one of the primary rRNA binding proteins, it binds directly to 16S rRNA where it nucleates assembly of the head domain of the 30S subunit. Is located at the subunit interface close to the decoding center, probably blocks exit of the E-site tRNA. This is Small ribosomal subunit protein uS7 from Nitrosococcus oceani (strain ATCC 19707 / BCRC 17464 / JCM 30415 / NCIMB 11848 / C-107).